Here is a 445-residue protein sequence, read N- to C-terminus: Alkylglycerol monooxygenase (445 aa).

The next 2 helical transmembrane spans lie at 43 to 63 (ATPFFISLMLLELVVSWILKG) and 111 to 131 (WDSPWTWYSAFLGVDFGYYWF). One can recognise a Fatty acid hydroxylase domain in the interval 120–249 (AFLGVDFGYY…LIIWDKIFGT (130 aa)). The Histidine box-1 signature appears at 132–136 (HRMAH). A Histidine box-2 motif is present at residues 145-149 (HQTHH). The Histidine box-3 signature appears at 221-225 (HRVHH). 3 helical membrane-spanning segments follow: residues 334–354 (LLKIYTVVQFALMLAFYEETF), 363–383 (VTLLLRVCFIILTLTSIGFLL), and 413–433 (VPSLSSAFEIVFSICIAFWGV).

The protein belongs to the sterol desaturase family. TMEM195 subfamily. Fe cation serves as cofactor.

Its subcellular location is the endoplasmic reticulum membrane. The enzyme catalyses 1-O-(1,2-saturated-alkyl)-sn-glycerol + (6R)-L-erythro-5,6,7,8-tetrahydrobiopterin + O2 = a 1-(1-hydroxyalkyl)-sn-glycerol + (6R)-L-erythro-6,7-dihydrobiopterin + H2O. Its function is as follows. Glyceryl-ether monooxygenase that cleaves the O-alkyl bond of ether lipids. Ether lipids are essential components of brain membranes. The polypeptide is Alkylglycerol monooxygenase (AGMO) (Homo sapiens (Human)).